The sequence spans 589 residues: Transcription factor atf-6 homolog (589 aa).

A compositionally biased stretch (basic and acidic residues) spans 1–16 (MNFDNTVHESNFDDLL). The interval 1 to 82 (MNFDNTVHES…SSPPLSCANF (82 aa)) is disordered. Low complexity-rich tracts occupy residues 36-54 (GTDESQESTSSSSFGFSDQ) and 67-78 (GDSSSDSSPPLS). Residues 250–299 (QNRKIRNRMYAQASRMRKKEADEHMKMNLQELLQENEILRTENAALKQRL) form the bZIP domain. The tract at residues 252 to 275 (RKIRNRMYAQASRMRKKEADEHMK) is basic motif. Residues 271 to 305 (DEHMKMNLQELLQENEILRTENAALKQRLAFFEHE) adopt a coiled-coil conformation. A leucine-zipper region spans residues 281-295 (LLQENEILRTENAAL). The chain crosses the membrane as a helical span at residues 324–344 (IIAAGSVLMMFGLFAVISPFN).

This sequence belongs to the bZIP family. ATF subfamily.

It is found in the nucleus. It localises to the membrane. Transcription factor. Plays a role in the unfolded protein response (UPR), perhaps mainly during constitutive endoplasmic reticulum (ER) stress, by activating transcription of genes involved in the UPR. Plays a role in modulating lifespan, acting by positively regulating expression of calcium-binding chaperone crt-1, thereby influencing ER calcium homeostasis. By activating the UPR pathway, confers adaptive protection to subsequent exposure to hypoxia. Involved in protection against proteotoxicity, probably acting via the UPR. Probably acts in the UPR in parallel with the ire-1-xbp-1 and pek-1 pathways. May be regulated by endopeptidase S2P-mediated proteolytic cleavage. This is Transcription factor atf-6 homolog from Caenorhabditis elegans.